Reading from the N-terminus, the 151-residue chain is Large ribosomal subunit protein bL9 (151 aa).

The protein belongs to the bacterial ribosomal protein bL9 family.

Binds to the 23S rRNA. This is Large ribosomal subunit protein bL9 from Francisella tularensis subsp. holarctica (strain LVS).